Consider the following 264-residue polypeptide: 3-methyl-2-oxobutanoate hydroxymethyltransferase (264 aa).

Asp-45 and Asp-84 together coordinate Mg(2+). Residues 45–46 (DS), Asp-84, and Lys-112 each bind 3-methyl-2-oxobutanoate. Glu-114 serves as a coordination point for Mg(2+). The active-site Proton acceptor is Glu-181.

The protein belongs to the PanB family. Homodecamer; pentamer of dimers. The cofactor is Mg(2+).

The protein resides in the cytoplasm. The enzyme catalyses 3-methyl-2-oxobutanoate + (6R)-5,10-methylene-5,6,7,8-tetrahydrofolate + H2O = 2-dehydropantoate + (6S)-5,6,7,8-tetrahydrofolate. It functions in the pathway cofactor biosynthesis; (R)-pantothenate biosynthesis; (R)-pantoate from 3-methyl-2-oxobutanoate: step 1/2. Functionally, catalyzes the reversible reaction in which hydroxymethyl group from 5,10-methylenetetrahydrofolate is transferred onto alpha-ketoisovalerate to form ketopantoate. The sequence is that of 3-methyl-2-oxobutanoate hydroxymethyltransferase from Shewanella piezotolerans (strain WP3 / JCM 13877).